A 380-amino-acid chain; its full sequence is L-lactate dehydrogenase (380 aa).

One can recognise an FMN hydroxy acid dehydrogenase domain in the interval 1–380 (MIISSTTDFR…DRSILAKTDR (380 aa)). Tyr-24 is a substrate binding site. FMN is bound by residues Ser-106 and Gln-127. Tyr-129 contacts substrate. Thr-155 lines the FMN pocket. Arg-164 provides a ligand contact to substrate. Lys-251 serves as a coordination point for FMN. The Proton acceptor role is filled by His-275. Arg-278 is a substrate binding site. 306–330 (DGGVRSGLDVVRMLALGAKGVLLGR) contributes to the FMN binding site.

Belongs to the FMN-dependent alpha-hydroxy acid dehydrogenase family. FMN is required as a cofactor.

It is found in the cell inner membrane. The enzyme catalyses (S)-lactate + A = pyruvate + AH2. In terms of biological role, catalyzes the conversion of L-lactate to pyruvate. Is coupled to the respiratory chain. The sequence is that of L-lactate dehydrogenase from Caulobacter sp. (strain K31).